A 633-amino-acid chain; its full sequence is MRALFLHSNRIKVIARQKALKEADQLEKPEFDVNKEHLAVFVAVEHGDNLSVAEQLVEEIKKVLEKIGIKEKVVVLYPYVHLTNNPSSPKLAKEVLDKAYDLLKSEGFEVYKAPFGWYKEFEIHVKGHPLAELSRTIKPKKVKKEEGNKVYLIYDGEKEYIIVGKKDKILVKDYKEIENKEKLHFELPKDGIELPIPINQDFEKMVLKEVFSEGEEIEKNPLNDVAKKFGFEWEPLSDYGHMRYKPYAALMVDLVNDYSIKIAKELPFPVFIVKGTNMFDLKQGPVAEHAKLFGERMYEVQSDKSVFVLRYAACFQQFAIAKDLTLSYKNVPFGMLEVADSYRFEQPGEVVLAFRLRKFYMPDLHVFTKDLDEAVEQFLNMHKKIMEEIKKIGRDYELLINVASFEDYEKYKYIIEQIYKDVKKPLLLAIYPKSDQRYWIINIEYHIIDVLGRPREIGTTQIDLHNSKRFGIKYIDKDGSEKHVIILHNAILGSIERYIYALFDTALRKEKPVLPFWISPVQVRVIPVSEKYLEYAEQIAKELESKFRVELDDRDETLNKKIKDAESLWVPYIIVIGEKEIKNNKITVRDRYENKVYETSLEDLISKMEELQKGYPFRPLYGPMKLSLKPANL.

An editing domain region spans residues 1–143; sequence MRALFLHSNR…SRTIKPKKVK (143 aa). Catalytic regions lie at residues 220–515 and 221–515; these read NPLN…PVLP and PLND…PVLP. Zn(2+) contacts are provided by cysteine 314, histidine 365, and histidine 488.

The protein belongs to the class-II aminoacyl-tRNA synthetase family. In terms of assembly, homodimer. Zn(2+) is required as a cofactor.

It localises to the cytoplasm. It catalyses the reaction tRNA(Thr) + L-threonine + ATP = L-threonyl-tRNA(Thr) + AMP + diphosphate + H(+). Catalyzes the attachment of threonine to tRNA(Thr) in a two-step reaction: L-threonine is first activated by ATP to form Thr-AMP and then transferred to the acceptor end of tRNA(Thr). Also edits incorrectly charged L-seryl-tRNA(Thr). This chain is Threonine--tRNA ligase, found in Nanoarchaeum equitans (strain Kin4-M).